Consider the following 176-residue polypeptide: Calponin-1 (176 aa).

Positions 22–125 (PQTERQLRVW…STLIALASQA (104 aa)) constitute a Calponin-homology (CH) domain. The stretch at 158 to 176 (IGLQMGTNKFASQQGMTAY) is one Calponin-like repeat. A Phosphothreonine; by ROCK2 modification is found at Thr-164. Ser-169 carries the phosphoserine; by ROCK2 modification. At Thr-174 the chain carries Phosphothreonine; by ROCK2.

It belongs to the calponin family. Smooth muscle, and tissues containing significant amounts of smooth muscle.

Thin filament-associated protein that is implicated in the regulation and modulation of smooth muscle contraction. It is capable of binding to actin, calmodulin and tropomyosin. The interaction of calponin with actin inhibits the actomyosin Mg-ATPase activity. The protein is Calponin-1 (CNN1) of Meleagris gallopavo (Wild turkey).